The chain runs to 122 residues: Ig heavy chain V region M511 (122 aa).

The Ig-like domain maps to 1-114; the sequence is EVKLVESGGG…SYWYFDVWGA (114 aa).

In Mus musculus (Mouse), this protein is Ig heavy chain V region M511.